Reading from the N-terminus, the 113-residue chain is Hydrogenase maturation factor HypA (113 aa).

Residue H2 coordinates Ni(2+). Zn(2+)-binding residues include C73, C76, C89, and C92.

It belongs to the HypA/HybF family.

Involved in the maturation of [NiFe] hydrogenases. Required for nickel insertion into the metal center of the hydrogenase. This chain is Hydrogenase maturation factor HypA, found in Rhodopseudomonas palustris (strain BisB5).